The sequence spans 219 residues: Protein YNG1 (219 aa).

A PHD-type; degenerate zinc finger spans residues 155-204; that stretch reads EVYCFCRNVSYGPMVACDNPACPFEWFHYGCVGLKQAPKGKWYCSKDCKE. Positions 158, 160, 171, 176, 182, 185, 198, and 202 each coordinate Zn(2+).

It belongs to the ING family. As to quaternary structure, component of the NuA3 histone acetyltransferase (HAT) complex. The NuA3 HAT complex has 2 functionally distinct forms that participate in transcription. The NuA3a HAT complex is composed of at least NTO1, SAS3, TAF14, YNG1 and EAF6. The NuA3b HAT complex contains an additional subunit, PDP3. Interacts with H3K4me3 and to a lesser extent with H3K4me2.

The protein localises to the nucleus. In terms of biological role, histone-binding component of the NuA3a histone acetyltransferase complex. Targets the NuA3a HAT complex via histone H3K4me3 to facilitate transcription initiation at promoter regions. SAS3 then acetylates H3K14, leading to transcription initiation at a subset of genes. YNG1 is required for the HAT activity of NuA3 but not for its integrity. Mediates the interaction of SAS3 with nucleosomes. This chain is Protein YNG1 (YNG1), found in Saccharomyces cerevisiae (strain ATCC 204508 / S288c) (Baker's yeast).